Here is a 192-residue protein sequence, read N- to C-terminus: SPbeta prophage-derived uncharacterized protein YokK (192 aa).

The polypeptide is SPbeta prophage-derived uncharacterized protein YokK (yokK) (Bacillus subtilis (strain 168)).